Consider the following 146-residue polypeptide: Prefoldin subunit alpha (146 aa).

The protein belongs to the prefoldin alpha subunit family. Heterohexamer of two alpha and four beta subunits.

It is found in the cytoplasm. Functionally, molecular chaperone capable of stabilizing a range of proteins. Seems to fulfill an ATP-independent, HSP70-like function in archaeal de novo protein folding. This is Prefoldin subunit alpha from Methanobrevibacter smithii (strain ATCC 35061 / DSM 861 / OCM 144 / PS).